A 310-amino-acid chain; its full sequence is N-acetyl-gamma-glutamyl-phosphate reductase (310 aa).

C117 is a catalytic residue.

The protein belongs to the NAGSA dehydrogenase family. Type 2 subfamily.

It localises to the cytoplasm. The enzyme catalyses N-acetyl-L-glutamate 5-semialdehyde + phosphate + NADP(+) = N-acetyl-L-glutamyl 5-phosphate + NADPH + H(+). The protein operates within amino-acid biosynthesis; L-arginine biosynthesis; N(2)-acetyl-L-ornithine from L-glutamate: step 3/4. In terms of biological role, catalyzes the NADPH-dependent reduction of N-acetyl-5-glutamyl phosphate to yield N-acetyl-L-glutamate 5-semialdehyde. The polypeptide is N-acetyl-gamma-glutamyl-phosphate reductase (Sinorhizobium medicae (strain WSM419) (Ensifer medicae)).